The following is a 72-amino-acid chain: Brevinin-2GHc (72 aa).

A signal peptide spans 1 to 22; the sequence is MFTMKKSLLLLFFLGMISLSLC. The propeptide occupies 23 to 42; it reads EQERGADEDEGEVEEQIKRS. A disulfide bridge links Cys64 with Cys70.

Expressed by the skin glands.

The protein resides in the secreted. In terms of biological role, antimicrobial peptide. Active against the Gram-positive bacteria S.aureus FDA209P (MIC=9.8 ug/ml) and B.subtilis ATCC 6633 (MIC&gt;64 ug/ml), and the Gram-negative bacteria E.coli O111 (MIC=19.6 ug/ml) and E.coli ATCC 25922 (MIC=9.8 ug/ml). Not active against the fungus C.albicans. The chain is Brevinin-2GHc from Sylvirana guentheri (Gunther's frog).